Reading from the N-terminus, the 98-residue chain is Small ribosomal subunit protein bS20 (98 aa).

The span at 1 to 12 (MAPRKPSKKVGP) shows a compositional bias: basic residues. The interval 1–31 (MAPRKPSKKVGPQKRPSAEKRVITSKKKQLR) is disordered.

It belongs to the bacterial ribosomal protein bS20 family.

Its function is as follows. Binds directly to 16S ribosomal RNA. This chain is Small ribosomal subunit protein bS20, found in Chlamydia trachomatis serovar A (strain ATCC VR-571B / DSM 19440 / HAR-13).